The sequence spans 267 residues: MTIMRKNHPLLKIINHSFIDLPTPSNISSWWNFGSLLGICLMIQILTGLFLAMHYTSDTATAFSSVTHICRDVNYGWLIRYLHANGASMFFICLFIHVGRGIYYGSYMLSETWNIGIILFLTTMATAFVGYVLPWGQMSFWGATVITNLLSAIPYIGTSLVEWIWGGFSVDKATLTRFFAFHFILPFIITAFVLVHLLFLHETGSNNPSGLNSNSDKIPFHPYYTIKDLLGVILLLMVLMILVLFFPDVLGDPDNYTPANPLNTPAH.

Helical transmembrane passes span 33–53 (FGSL…FLAM), 77–98 (WLIR…FIHV), 113–133 (WNIG…GYVL), and 178–198 (FFAF…VHLL). Positions 83 and 97 each coordinate heme b. Heme b-binding residues include His182 and His196. His201 contributes to the a ubiquinone binding site. A helical membrane pass occupies residues 226 to 246 (IKDLLGVILLLMVLMILVLFF).

It belongs to the cytochrome b family. In terms of assembly, the cytochrome bc1 complex contains 11 subunits: 3 respiratory subunits (MT-CYB, CYC1 and UQCRFS1), 2 core proteins (UQCRC1 and UQCRC2) and 6 low-molecular weight proteins (UQCRH/QCR6, UQCRB/QCR7, UQCRQ/QCR8, UQCR10/QCR9, UQCR11/QCR10 and a cleavage product of UQCRFS1). This cytochrome bc1 complex then forms a dimer. Heme b serves as cofactor.

Its subcellular location is the mitochondrion inner membrane. Component of the ubiquinol-cytochrome c reductase complex (complex III or cytochrome b-c1 complex) that is part of the mitochondrial respiratory chain. The b-c1 complex mediates electron transfer from ubiquinol to cytochrome c. Contributes to the generation of a proton gradient across the mitochondrial membrane that is then used for ATP synthesis. This is Cytochrome b (MT-CYB) from Abrothrix olivaceus (Olive grass mouse).